The following is a 446-amino-acid chain: MAQKLWEKNVQVDHEVDIFTVGKDREMDLYLAKYDVLGSMAHITMLESIGLLTKEELNVLLAELRNIYAVADRGEFIIEEGIEDVHSQVELMLTRRLGDMGKKIHSGRSRNDQVLLDLKLFTRSQIQELVELVSGLFDVLISQSNRYKDVLLPGYTHLQVAMPSSFGLWFGAYAESLVDDLQLMQAAYRICNRNPLGSAAGYGSSFPLNRQMTTDLLGFDSLDYNVVYAQMGRGKMERTVAFAMAGIAATLSKLAFDACMFNSQNFGFIKLPDQFTTGSSIMPHKKNPDVFELTRAKCNKLQGLPQQIILISNNLPSGYFRDLQIIKEVFLPAFDELKDCLRMVTHMMREVKVNEHILDDDKYSLLFSVEEVNRRVLAGMPFRDAYKQVGLDIEAGKFIPSKSVNHTHEGSIGNLCNESITAMMRSVIGSFSFERMNEAEKKLIHG.

Belongs to the lyase 1 family. Argininosuccinate lyase subfamily.

The protein localises to the cytoplasm. It catalyses the reaction 2-(N(omega)-L-arginino)succinate = fumarate + L-arginine. Its pathway is amino-acid biosynthesis; L-arginine biosynthesis; L-arginine from L-ornithine and carbamoyl phosphate: step 3/3. This Parabacteroides distasonis (strain ATCC 8503 / DSM 20701 / CIP 104284 / JCM 5825 / NCTC 11152) protein is Argininosuccinate lyase.